Reading from the N-terminus, the 342-residue chain is S-adenosyl-L-methionine-dependent tRNA 4-demethylwyosine synthase (342 aa).

Residues Cys45, Cys58, Cys71, Cys81, Cys85, and Cys88 each coordinate [4Fe-4S] cluster. The 249-residue stretch at 64-312 (YGIHSHRCLQ…VKHLPGYHIE (249 aa)) folds into the Radical SAM core domain.

Belongs to the TYW1 family. In terms of assembly, monomer. [4Fe-4S] cluster is required as a cofactor.

It is found in the cytoplasm. The enzyme catalyses N(1)-methylguanosine(37) in tRNA(Phe) + pyruvate + S-adenosyl-L-methionine = 4-demethylwyosine(37) in tRNA(Phe) + 5'-deoxyadenosine + L-methionine + CO2 + H2O. In terms of biological role, component of the wyosine derivatives biosynthesis pathway that catalyzes the condensation of N-methylguanine with 2 carbon atoms from pyruvate to form the tricyclic 4-demethylwyosine (imG-14) on guanosine-37 of tRNA(Phe). This is S-adenosyl-L-methionine-dependent tRNA 4-demethylwyosine synthase from Pyrococcus abyssi (strain GE5 / Orsay).